The following is a 185-amino-acid chain: Alpha-S1-casein (185 aa).

The first 15 residues, 1–15 (MRLLILTCLVAVALA), serve as a signal peptide directing secretion. Phosphoserine is present on residues Ser-31, Ser-33, Ser-41, Ser-71, Ser-85, Ser-86, Ser-88, Ser-89, Ser-90, and Ser-91.

It belongs to the alpha-casein family. In terms of assembly, heteromultimers of alpha-s1 casein and kappa-casein; disulfide-linked. Not glycosylated. As to expression, mammary gland specific. Secreted in milk.

It is found in the secreted. Functionally, important role in the capacity of milk to transport calcium phosphate. In terms of biological role, casoxin D acts as opioid antagonist and has vasorelaxing activity mediated by bradykinin B1 receptors. This is Alpha-S1-casein (CSN1S1) from Homo sapiens (Human).